We begin with the raw amino-acid sequence, 311 residues long: Olfactory receptor 5M8 (311 aa).

Topologically, residues 1-24 (MRRNCTLVTEFILLGLTSRRELQI) are extracellular. Asparagine 4 is a glycosylation site (N-linked (GlcNAc...) asparagine). The helical transmembrane segment at 25–45 (LLFTLFLAIYMVTVAGNLGMI) threads the bilayer. Topologically, residues 46-53 (VLIQANAW) are cytoplasmic. The helical transmembrane segment at 54–74 (LHMPMYFFLSHLSFVDLCFSS) threads the bilayer. Topologically, residues 75 to 98 (NVTPKMLEIFLSEKKSISYPACLV) are extracellular. Cysteines 96 and 188 form a disulfide. Residues 99–119 (QCYLFIALVHVEIYILAVMAF) traverse the membrane as a helical segment. Residues 120 to 138 (DRYMAICNPLLYGSRMSKS) lie on the Cytoplasmic side of the membrane. The chain crosses the membrane as a helical span at residues 139-159 (VCSFLITVPYVYGALTGLMET). At 160–195 (MWTYNLAFCGPNEINHFYCADPPLIKLACSDTYNKE) the chain is on the extracellular side. The helical transmembrane segment at 196-216 (LSMFIVAGWNLSFSLFIICIS) threads the bilayer. Over 217–236 (YLYIFPAILKIRSTEGRQKA) the chain is Cytoplasmic. A helical membrane pass occupies residues 237 to 257 (FSTCGSHLTAVTIFYATLFFM). Residues 258-270 (YLRPPSKESVEQG) lie on the Extracellular side of the membrane. A helical transmembrane segment spans residues 271 to 291 (KMVAVFYTTVIPMLNLIIYSL). The Cytoplasmic portion of the chain corresponds to 292-311 (RNKNVKEALIKELSMKIYFS).

Belongs to the G-protein coupled receptor 1 family.

The protein localises to the cell membrane. Functionally, odorant receptor. The polypeptide is Olfactory receptor 5M8 (OR5M8) (Homo sapiens (Human)).